A 595-amino-acid chain; its full sequence is uncharacterized protein (595 aa).

9 helical membrane passes run 64–84, 86–106, 239–259, 281–301, 334–354, 368–388, 504–524, 547–567, and 571–591; these read VVFL…LIVF, IFYA…IGVL, FYVI…PVAS, FYLW…GILP, VHFI…LFFI, MFGI…HFII, FIYV…SYIM, YLFQ…GILT, and IIAG…LFKF.

It to M.jannaschii FlaJ.

It localises to the cell membrane. This is an uncharacterized protein from Methanocaldococcus jannaschii (strain ATCC 43067 / DSM 2661 / JAL-1 / JCM 10045 / NBRC 100440) (Methanococcus jannaschii).